Consider the following 723-residue polypeptide: ADP-ribosylation factor-binding protein GGA3 (723 aa).

Residues 1–313 (MAEAEGESLE…GEVATLTLPD (313 aa)) form a binds to ARF1 (in long isoform) region. One can recognise a VHS domain in the interval 16–146 (ATNPSNRQED…MLKRQGIVQS (131 aa)). Residues Ser159 and Ser275 each carry the phosphoserine modification. The region spanning 171–298 (DEEKSKLLAK…VINSYKTIIE (128 aa)) is the GAT domain. Positions 299–593 (GQVINGEVAT…IHVPLESIKP (295 aa)) are unstructured hinge. The tract at residues 339-384 (SSVLAPAPTPPSSGIPILPPPPQASGPPRSRSSSQAEATLGPSSTS) is disordered. Residues 345–363 (APTPPSSGIPILPPPPQAS) show a composition bias toward pro residues. Positions 364–374 (GPPRSRSSSQA) are enriched in low complexity. Positions 391 to 395 (DEELL) match the DXXLL motif. The disordered stretch occupies residues 428-464 (DFFSPRPGTAACGASDAPLLQPSAPSSSSSQAPLPPP). Low complexity predominate over residues 441-459 (ASDAPLLQPSAPSSSSSQA). Residues 594–715 (SSALPVTAYD…TEVGEVDQFP (122 aa)) enclose the GAE domain.

This sequence belongs to the GGA protein family. In terms of assembly, monomer. Interacts with GGA1 and GGA2. Binds to clathrin and activated ARFs, such as ARF1, ARF5 and ARF6. Binds RABEP1 and RABGEF1. Interacts with the membrane proteins M6PR/CD-MPR and IGF2R/CI-MPR and the accessory proteins SYNRG, EPN4, NECAP1, NECAP2 and AFTPH/aftiphilin. Interacts with TSG101 and UBC. Interacts with ADRA2B. Interacts with NTRK1; the interaction is independent of NTRK1 activation and ubiquitination. Interacts (via VHS domain) with BACE1 (via DXXLL motif). In terms of processing, phosphorylated by CK2 and dephosphorylated by PP2A. Phosphorylation of GGA3 allows the internal DXXLL motif to bind the VHS domain and to inhibit the recognition of cargo signals. Ubiquitinated. Post-translationally, proteolytically cleaved during apoptosis by CASP3. As to expression, ubiquitously expressed.

The protein resides in the golgi apparatus. It is found in the trans-Golgi network membrane. Its subcellular location is the endosome membrane. It localises to the early endosome membrane. The protein localises to the recycling endosome membrane. Functionally, plays a role in protein sorting and trafficking between the trans-Golgi network (TGN) and endosomes. Mediates the ARF-dependent recruitment of clathrin to the TGN and binds ubiquitinated proteins and membrane cargo molecules with a cytosolic acidic cluster-dileucine (DXXLL) motif. Mediates export of the GPCR receptor ADRA2B to the cell surface. nvolved in BACE1 transport and sorting as well as regulation of BACE1 protein levels. Regulates retrograde transport of BACE1 from endosomes to the trans-Golgi network via interaction through the VHS motif and dependent of BACE1 phosphorylation. Modulates BACE1 protein levels independently of the interaction between VHS domain and DXXLL motif through recognition of ubiquitination. Key player in a novel DXXLL-mediated endosomal sorting machinery to the recycling pathway that targets NTRK1 to the plasma membrane. The protein is ADP-ribosylation factor-binding protein GGA3 of Homo sapiens (Human).